The primary structure comprises 157 residues: MFGTSVSALCLLFLLSVCTACYISNCPIGGKRSALAFPSRKCMACGPGDRGRCFGPNICCGEGMGCYVGSPEAAGCVEENYLPSPCEAGGRVCGSEEGRCAAPGICCDVEGCSIDQSCTEEDEAEYISQSVSSSHGHDLLMKLLNMISHTPPHRVHK.

The signal sequence occupies residues 1-20 (MFGTSVSALCLLFLLSVCTA). Cysteines 21 and 26 form a disulfide. Position 29 is a glycine amide (glycine 29). Cystine bridges form between cysteine 42–cysteine 86, cysteine 45–cysteine 59, cysteine 53–cysteine 76, cysteine 60–cysteine 66, cysteine 93–cysteine 106, cysteine 100–cysteine 118, and cysteine 107–cysteine 112.

Belongs to the vasopressin/oxytocin family. In terms of processing, seven disulfide bonds are present in neurophysin.

It localises to the secreted. Its function is as follows. Isotocin causes contraction of smooth muscles. This Oncorhynchus keta (Chum salmon) protein is Isotocin-neurophysin IT 1.